Consider the following 124-residue polypeptide: Darcynin homolog (124 aa).

It belongs to the darcynin family.

The chain is Darcynin homolog from Granulibacter bethesdensis (strain ATCC BAA-1260 / CGDNIH1).